Consider the following 304-residue polypeptide: MRIGVIMGGVSSEKQVSIMTGNEMIANLDKNKYEIVPITLNEKMDLIEKAKDIDFALLALHGKYGEDGTVQGTLESLGIPYSGSNMLSSGICMDKNISKKILRYEGIETPDWIELTKMEDLNFDELDKLGFPLVVKPNSGGSSVGVKIVYDKDELISMLETVFEWDSEVVIEKYIKGEEITCSIFDGKQLPIISIRHAAEFFDYNAKYDDASTIEEVIELPAELKERVNKASLACYKALKCSVYARVDMMVKDGIPYVMEVNTLPGMTQASLLPKSADAAGIHYSKLLDMIIETSLRVRKEEGF.

The region spanning 99 to 293 (KKILRYEGIE…YSKLLDMIIE (195 aa)) is the ATP-grasp domain. 126-181 (LDKLGFPLVVKPNSGGSSVGVKIVYDKDELISMLETVFEWDSEVVIEKYIKGEEIT) is a binding site for ATP. Asp-248, Glu-260, and Asn-262 together coordinate Mg(2+).

It belongs to the D-alanine--D-alanine ligase family. Mg(2+) serves as cofactor. It depends on Mn(2+) as a cofactor.

The protein localises to the cytoplasm. The catalysed reaction is 2 D-alanine + ATP = D-alanyl-D-alanine + ADP + phosphate + H(+). It functions in the pathway cell wall biogenesis; peptidoglycan biosynthesis. Cell wall formation. In Bacillus anthracis (strain A0248), this protein is D-alanine--D-alanine ligase.